Here is a 300-residue protein sequence, read N- to C-terminus: MDQQSTRTDITVNVDGFWMLQALLDIRHVAPELRCRPYVSTDSNDWLNEHPGMAVMREQGIVVNDAVNEQVAARMKVLAAPDLEVVALLSRGKLLYGVIDDENQPPGSRDIPDNEFRVVLARRGQHWVSAVRVGNDITVDDVTVSDSASIAALVMDGLESIHHADPAAINAVNVPMEEMLEATKSWQESGFNVFSGGDLRRMGISAATVAALGQALSDPAAEVAVYARQYRDDAKGPSASVLSLKDGSGGRIALYQQARTAGSGEAWLAICPATPQLVQVGVKTVLDTLPYGEWKTHSRV.

Belongs to the EspG family. In terms of assembly, interacts specifically with ESX-5-dependent PE/PPE proteins. Forms a 1:1:1 heterotrimeric complex with the PE25/PPE41 dimer, via PPE41. Binding of EspG5 does not cause conformational changes in the PE25/PPE41 dimer. Forms a 1:1:1 heterotrimeric complex with the PE8/PPE15 dimer, via PPE15.

The protein localises to the cytoplasm. Its function is as follows. Specific chaperone for cognate PE/PPE proteins. Plays an important role in preventing aggregation of PE/PPE dimers. The protein is ESX-5 secretion-associated protein EspG5 of Mycobacterium tuberculosis (strain ATCC 25618 / H37Rv).